The chain runs to 1057 residues: uncharacterized protein (1057 aa).

This sequence belongs to the IIV-6 261R/396L/443R family.

This is an uncharacterized protein from Acheta domesticus (House cricket).